The following is a 434-amino-acid chain: Sodium/bile acid cotransporter 5 (434 aa).

An N-terminal signal peptide occupies residues 1–18 (MSGKLFIILLLLVTPGEA). Topologically, residues 19–129 (RKSFLRFLNI…VSVFRQTEDS (111 aa)) are extracellular. N-linked (GlcNAc...) asparagine glycosylation is found at Asn73 and Asn96. Residues 130 to 150 (LFQEPIHVNSSVFLLVLLMIL) form a helical membrane-spanning segment. The Cytoplasmic portion of the chain corresponds to 151 to 172 (LNKCAFGCKIELQVLQTVWKRP). The helical transmembrane segment at 173 to 193 (LPILLGAVTQFFLMPFCGFLL) threads the bilayer. Topologically, residues 194–195 (SQ) are extracellular. A helical transmembrane segment spans residues 196–216 (ILGLSKAQAFGFVMTCTCPGG). Residues 217–232 (GGGYLFALLLEGDVTL) are Cytoplasmic-facing. Residues 233 to 255 (AILMACTSTSLALIMMPVNSYLY) form a helical membrane-spanning segment. Topologically, residues 256–268 (SCLLGLAGVFHVP) are extracellular. A helical transmembrane segment spans residues 269-289 (VLKIVSTLLFILTPVSIGIVI). Over 290–306 (KHRMPKKAVCLERVVQP) the chain is Cytoplasmic. The helical transmembrane segment at 307–327 (LSLTLMLVGVYLAFRMGLVFL) threads the bilayer. Residues 328-331 (RMAN) are Extracellular-facing. The helical transmembrane segment at 332-352 (LEVFLLGLLVPVLGFSFGYSF) threads the bilayer. At 353 to 365 (AKVYLLPLPVCKT) the chain is on the cytoplasmic side. Residues 366–386 (VAIESGMLNSFLALAIIQLSF) traverse the membrane as a helical segment. The Extracellular portion of the chain corresponds to 387 to 395 (PQSKAYEAS). The helical transmembrane segment at 396 to 416 (VAPFTVAMCSSCEMLLLLLVY) threads the bilayer. Over 417 to 434 (KAKKRPLLSTENEKAPLV) the chain is Cytoplasmic.

This sequence belongs to the bile acid:sodium symporter (BASS) (TC 2.A.28) family.

Its subcellular location is the membrane. This is Sodium/bile acid cotransporter 5 (Slc10a5) from Rattus norvegicus (Rat).